The sequence spans 205 residues: MIAKLKGILDSITDSYLIIDINGVGYQVYSSGKTLMKLIKEEGSIVSLFIETHVREDRIHLFGFLDNTEKVAFNMLQSVSGIGTKMALHILSNLTPHQLQIAISSQNRHQLKAISGVGPKLIDRLMIELRDKVANINTIANNTSLATLSTDSNTHDNILSDAITALIALGISRAEATQILSDIYALSPSISVNELVRTALQRRAK.

A domain I region spans residues 1–65 (MIAKLKGILD…EDRIHLFGFL (65 aa)). Residues 66–144 (DNTEKVAFNM…NINTIANNTS (79 aa)) are domain II. Positions 145–153 (LATLSTDSN) are flexible linker. The segment at 154–205 (THDNILSDAITALIALGISRAEATQILSDIYALSPSISVNELVRTALQRRAK) is domain III.

This sequence belongs to the RuvA family. Homotetramer. Forms an RuvA(8)-RuvB(12)-Holliday junction (HJ) complex. HJ DNA is sandwiched between 2 RuvA tetramers; dsDNA enters through RuvA and exits via RuvB. An RuvB hexamer assembles on each DNA strand where it exits the tetramer. Each RuvB hexamer is contacted by two RuvA subunits (via domain III) on 2 adjacent RuvB subunits; this complex drives branch migration. In the full resolvosome a probable DNA-RuvA(4)-RuvB(12)-RuvC(2) complex forms which resolves the HJ.

The protein resides in the cytoplasm. In terms of biological role, the RuvA-RuvB-RuvC complex processes Holliday junction (HJ) DNA during genetic recombination and DNA repair, while the RuvA-RuvB complex plays an important role in the rescue of blocked DNA replication forks via replication fork reversal (RFR). RuvA specifically binds to HJ cruciform DNA, conferring on it an open structure. The RuvB hexamer acts as an ATP-dependent pump, pulling dsDNA into and through the RuvAB complex. HJ branch migration allows RuvC to scan DNA until it finds its consensus sequence, where it cleaves and resolves the cruciform DNA. This Orientia tsutsugamushi (strain Ikeda) (Rickettsia tsutsugamushi) protein is Holliday junction branch migration complex subunit RuvA.